We begin with the raw amino-acid sequence, 25 residues long: Zinc metalloproteinase-disintegrin-like daborhagin-M (25 aa).

The region spanning 14-25 (SYVELIITVDHS) is the Peptidase M12B domain. Glu-17 lines the Ca(2+) pocket.

This sequence belongs to the venom metalloproteinase (M12B) family. P-III subfamily. P-IIIa sub-subfamily. Monomer. Zn(2+) serves as cofactor. In terms of processing, N-glycosylated. Post-translationally, contains 16 disulfide bonds. In terms of tissue distribution, expressed by the venom gland.

The protein localises to the secreted. With respect to regulation, inhibited by EDTA, EGTA and 1,10-phenanthroline. Addition of Mg(2+) or Ca(2+) increases the casein hydrolysis rate. In terms of biological role, snake venom zinc metalloprotease that possesses high hemorrhagic activity (minimum hemorrhagic dose, MHD=0.86 ug) when subcutaneously injected into mice. Has potent fibrinogenolytic activity on alpha-chain of fibrinogen (FGA). Hydrolyzes model substrate (beta-chain of insulin) at Ala(14)-Leu(15) and Tyr(16)-Leu(17) followed by His(10)-Leu(11) and Phe(24)-Phe(25). In Daboia siamensis (Eastern Russel's viper), this protein is Zinc metalloproteinase-disintegrin-like daborhagin-M.